Consider the following 262-residue polypeptide: (2Z,6E)-farnesyl diphosphate synthase (262 aa).

The active site involves D40. D40 serves as a coordination point for Mg(2+). Substrate-binding positions include G41–R44, W45, and S86–E88. Residue N89 is the Proton acceptor of the active site. Substrate is bound by residues R92, R211, and R217 to S219. Residue E230 coordinates Mg(2+).

This sequence belongs to the UPP synthase family. Z-FPP synthase subfamily. In terms of assembly, homodimer. The cofactor is Mg(2+).

It localises to the cytoplasm. It is found in the cell membrane. It catalyses the reaction isopentenyl diphosphate + (2E)-geranyl diphosphate = (2Z,6E)-farnesyl diphosphate + diphosphate. Catalyzes the condensation of only one isopentenyl pyrophosphate (IPP) unit in the cis configuration to E-geranyl diphosphate (E-GPP) generating the 15 carbon product (2Z,6E)-farnesyl diphosphate (Z-FPP or EZ-FPP). Z-FPP is the precursor of decaprenyl diphosphate, which has a central role in the biosynthesis of the mycobacterial cell wall. The sequence is that of (2Z,6E)-farnesyl diphosphate synthase from Mycobacterium tuberculosis (strain CDC 1551 / Oshkosh).